The primary structure comprises 221 residues: MNSHSTDKRKKITRIGIGGPVGSGKTAIIEVITPILIKRGIKPLIITNDIVTTEDAKQVKRTLKGILDEEKILGVETGACPHTAVREDPSMNIAAVEEMEERFPDSNLIMIESGGDNLTLTFSPALADFYIYVIDVAEGEKIPRKNGPGLVQADILVINKIDLAPYVGASLDVMESDTKVVRGERPYILTNCKTGQGIEELVDMIMRDFLFTHVQPQGEHA.

Residue 19–26 (GPVGSGKT) coordinates GTP.

It belongs to the SIMIBI class G3E GTPase family. UreG subfamily. In terms of assembly, homodimer. UreD, UreF and UreG form a complex that acts as a GTP-hydrolysis-dependent molecular chaperone, activating the urease apoprotein by helping to assemble the nickel containing metallocenter of UreC. The UreE protein probably delivers the nickel.

The protein resides in the cytoplasm. Facilitates the functional incorporation of the urease nickel metallocenter. This process requires GTP hydrolysis, probably effectuated by UreG. In terms of biological role, expression of the urease operon increases the likelihood of bacterial survival by contributing to acid resistance in vitro and in vivo in BALB/c mice. Y.enterocolitica enters the body via an oral path and must survive the acidic stomach before being able to colonize the intestinal mucosa. This Yersinia enterocolitica protein is Urease accessory protein UreG.